Consider the following 561-residue polypeptide: DNA ligase B (561 aa).

Lys125 (N6-AMP-lysine intermediate) is an active-site residue.

It belongs to the NAD-dependent DNA ligase family. LigB subfamily.

It catalyses the reaction NAD(+) + (deoxyribonucleotide)n-3'-hydroxyl + 5'-phospho-(deoxyribonucleotide)m = (deoxyribonucleotide)n+m + AMP + beta-nicotinamide D-nucleotide.. Catalyzes the formation of phosphodiester linkages between 5'-phosphoryl and 3'-hydroxyl groups in double-stranded DNA using NAD as a coenzyme and as the energy source for the reaction. The polypeptide is DNA ligase B (Salmonella choleraesuis (strain SC-B67)).